A 307-amino-acid polypeptide reads, in one-letter code: MDLILLVGIATALLLILITLYFLQSKNAKTETKAAAQPQRGVPQRAQEGVPRRAQIARNQRNRLRQNQNAPAVAAAAAPAAAVDSDDDEAAAAGDENGPRVPQGAVLDEKMGAKKRAKMEAKEQKRLQREQELHDREQRKVKEAKEDAERKQQEDLDAEVERKKAEADRLAKEERERKEHEEYLKMKAAFSIEEEGFEEGDADDKESLLADFIQYIKDNKVVLLEDLATAFKLKTQQAIDRIQELQENGTLTGVIDDRGKFIYVSEAELAAVAKFIKQRGRVSIAELAESSNNLINLTPVAAGESSA.

Residues 1–2 (MD) are Lumenal-facing. The helical transmembrane segment at 3 to 23 (LILLVGIATALLLILITLYFL) threads the bilayer. Residues 24–307 (QSKNAKTETK…TPVAAGESSA (284 aa)) are Cytoplasmic-facing. Residues 31 to 175 (ETKAAAQPQR…EADRLAKEER (145 aa)) are disordered. Positions 52–83 (RRAQIARNQRNRLRQNQNAPAVAAAAAPAAAV) are enriched in low complexity. Residues 107-175 (LDEKMGAKKR…EADRLAKEER (69 aa)) are compositionally biased toward basic and acidic residues.

This sequence belongs to the DDRGK1 family. In terms of assembly, interacts with Atg9; the interaction is transient.

Its subcellular location is the endoplasmic reticulum membrane. Substrate adapter for ufmylation, the covalent attachment of the ubiquitin-like modifier UFM1 to substrate proteins. Required for ufmylation of Atg9; protects the nervous system during aging, possibly by stabilizing Atg9 and supporting its function. The sequence is that of DDRGK domain-containing protein 1 from Drosophila virilis (Fruit fly).